The chain runs to 345 residues: Heat stress transcription factor A-2 (345 aa).

Low complexity predominate over residues 17–30 (GSVAASSSVGSSSS). A disordered region spans residues 17–40 (GSVAASSSVGSSSSPRPMEGLNET). A DNA-binding region spans residues 42 to 136 (PPPFLTKTYE…LLKNIKRRRN (95 aa)). The hydrophobic repeat HR-A/B stretch occupies residues 150–216 (SCVEVGQYGF…QMMTFLAKAL (67 aa)). The Nuclear localization signal motif lies at 231–238 (EKKSLFGL). The AHA1 signature appears at 273 to 282 (EMLFAAAIDD). Lys-315 is covalently cross-linked (Glycyl lysine isopeptide (Lys-Gly) (interchain with G-Cter in SUMO)). The short motif at 324–333 (LDWDSQDLHD) is the AHA2 element. A Nuclear export signal motif is present at residues 334–341 (MVDQMGFL).

The protein belongs to the HSF family. Class A subfamily. In terms of assembly, homotrimer. Interacts with SUMO1. Binds to HSBP. Post-translationally, exhibits temperature-dependent phosphorylation. Sumoylated at Lys-315. Sumoylation represses its function.

It localises to the cytoplasm. The protein resides in the nucleus. Transcriptional activator that specifically binds DNA sequence 5'-AGAAnnTTCT-3' known as heat shock promoter elements (HSE). Seems to be involved in other environmental stress responses. Activates ascorbate peroxidase 2 (APX2) in addition to several heat shock protein (HSPs). Binds to the promoter of SGIP1 and activates its expression in heat acclimated plants. Involved in the mechanisms necessary for quick response to heat and subsequent heritable transgenerational memory of heat acclimation (global warming) such as early flowering and attenuated immunity; this process includes epigenetic regulation as well as post-transcriptional gene silencing (PTGS). In response to heat, HSFA2 is activated and promotes the expression of REF6 which in turn derepresses HSFA2, thus establishing an inheritable feedback loop able to trigger SGIP1 and subsequent SGIP1-mediated SGS3 degradation; this prevents the biosynthesis of trans-acting siRNA (tasiRNA) and leads to the release of HTT5, which drives early flowering but attenuates immunity. The sequence is that of Heat stress transcription factor A-2 from Arabidopsis thaliana (Mouse-ear cress).